A 376-amino-acid polypeptide reads, in one-letter code: Glutamate 5-kinase (376 aa).

K15 contributes to the ATP binding site. Residues S56, D143, and N155 each contribute to the substrate site. 175-176 (SD) is a binding site for ATP. The 78-residue stretch at 281–358 (KGTLTIDAGA…PDVMSILGIT (78 aa)) folds into the PUA domain.

Belongs to the glutamate 5-kinase family.

The protein resides in the cytoplasm. The enzyme catalyses L-glutamate + ATP = L-glutamyl 5-phosphate + ADP. It participates in amino-acid biosynthesis; L-proline biosynthesis; L-glutamate 5-semialdehyde from L-glutamate: step 1/2. In terms of biological role, catalyzes the transfer of a phosphate group to glutamate to form L-glutamate 5-phosphate. The chain is Glutamate 5-kinase from Rhodopseudomonas palustris (strain BisB18).